The primary structure comprises 953 residues: E3 ubiquitin-protein ligase ZNF598 (953 aa).

The segment covering 25-39 has biased composition (basic residues); sequence KPSKSTRIKPTKPHH. Residues 25–47 form a disordered region; it reads KPSKSTRIKPTKPHHTPSNSMES. The segment at 57-97 adopts an RING-type zinc-finger fold; the sequence is CVLCCQDIDLFAVGKCDHPVCYRCSTKMRVLCEQKYCAVCR. The segment at 215–238 adopts a C2H2-type zinc-finger fold; it reads PLCKFCDDRYLDNDELLKHLRRDH. Disordered regions lie at residues 299–779 and 884–911; these read SKNR…EDSS and EKQQ…SSLD. Positions 371–380 are enriched in low complexity; that stretch reads AAAMRASMAS. A compositionally biased stretch (basic and acidic residues) spans 381-409; sequence HQEERSHAQERSMLKPRREEKLEPDETRN. Polar residues-rich tracts occupy residues 410-431 and 467-483; these read NRST…NGSL and LSGS…YTNQ. Serine 489 carries the post-translational modification Phosphoserine. 2 stretches are compositionally biased toward low complexity: residues 508-518 and 536-553; these read QSSAASAWSQA and MTPM…PLPS. Polar residues-rich tracts occupy residues 555-564 and 641-650; these read SVPQPLTASS and LGSPSHTPET. Over residues 655–666 the composition is skewed to basic and acidic residues; the sequence is AHKENVPEKKPP. The segment covering 695-711 has biased composition (polar residues); it reads SCTSFPENITSSKQPVT. Residues 747–765 are compositionally biased toward pro residues; that stretch reads LPPPPPPGLGPAVSKPPPG. A compositionally biased stretch (polar residues) spans 770–779; the sequence is PLNSNVEDSS.

Belongs to the ZNF598/HEL2 family.

It is found in the cytoplasm. The protein localises to the cytosol. It catalyses the reaction S-ubiquitinyl-[E2 ubiquitin-conjugating enzyme]-L-cysteine + [acceptor protein]-L-lysine = [E2 ubiquitin-conjugating enzyme]-L-cysteine + N(6)-ubiquitinyl-[acceptor protein]-L-lysine.. It participates in protein modification; protein ubiquitination. Its function is as follows. E3 ubiquitin-protein ligase that plays a key role in the ribosome quality control (RQC), a pathway that takes place when a ribosome has stalled during translation, leading to degradation of nascent peptide chains. ZNF598 is activated when ribosomes are stalled within an mRNA following translation of prematurely polyadenylated mRNAs. Acts as a ribosome collision sensor: specifically recognizes and binds collided di-ribosome, which arises when a trailing ribosome encounters a slower leading ribosome, leading to terminally arrest translation. Following binding to colliding ribosomes, mediates monoubiquitination of 40S ribosomal proteins RPS10/eS10 and RPS3/uS3, and 'Lys-63'-linked polyubiquitination of RPS20/uS10. Polyubiquitination of RPS20/uS10 promotes recruitment of the RQT (ribosome quality control trigger) complex, which drives the disassembly of stalled ribosomes, followed by degradation of nascent peptides. This is E3 ubiquitin-protein ligase ZNF598 from Danio rerio (Zebrafish).